A 1001-amino-acid chain; its full sequence is Ankyrin repeat domain-containing protein 35 (1001 aa).

ANK repeat units lie at residues 53 to 82 (NGQS…DINS), 86 to 115 (DGST…NEDA), 119 to 148 (ENRS…FLDV), 152 to 181 (DGRT…RVNV), 185 to 214 (NDKS…DAGA), and 218 to 247 (TGHD…RRRR). Disordered regions lie at residues 256–296 (PDLA…PCSE), 352–482 (PRAS…VAEP), and 559–601 (PEVP…ALGG). The span at 281 to 295 (PEEEQEEKEDEDPCS) shows a compositional bias: acidic residues. The stretch at 295–344 (SEEWRWKYEEERRKVVRLEQELVQKTEECKTQAAAYLDLENQIREQAQEL) forms a coiled coil. A compositionally biased stretch (basic and acidic residues) spans 402 to 422 (KKAEDSAPGKIQYEVHGRSQP). The span at 423 to 434 (EEQGPPQSPASE) shows a compositional bias: low complexity. Over residues 440–450 (TGQQLTTNGAQ) the composition is skewed to polar residues. Over residues 579–588 (KQDEEKEKRV) the composition is skewed to basic and acidic residues. 3 coiled-coil regions span residues 610–696 (KGQL…LLAS), 733–810 (ISTL…IGKL), and 851–968 (QELK…HEEI). Residues 879-902 (RRSGDLAAQAAEQERQASEMRGRS) are disordered. The segment covering 890–902 (EQERQASEMRGRS) has biased composition (basic and acidic residues).

This chain is Ankyrin repeat domain-containing protein 35 (ANKRD35), found in Homo sapiens (Human).